Consider the following 547-residue polypeptide: Fumarate reductase (CoM/CoB) subunit A (547 aa).

Belongs to the FAD-dependent oxidoreductase 2 family. Subunit A of the heterodimeric fumarate reductase of methanogenic Archaea, composed of subunits A (TfrA) and B (TfrB). It depends on an oxidized flavin as a cofactor.

It is found in the cytoplasm. It carries out the reaction coenzyme B + coenzyme M + fumarate = coenzyme M-coenzyme B heterodisulfide + succinate. Functionally, catalyzes the reduction of fumarate with reduced coenzyme M (CoM-S-H) and coenzyme B (CoB-S-H). In vitro, is able to reduces fumarate with reduced benzyl viologen, oxidize CoM-S-H and CoB-S-H to CoM-S-S-CoB with methylene blue, and reduce CoM-S-S-CoB with reduced benzyl viologen. The enzyme has specificity for the two thiol compounds as the CoB--CoM heterodisulfide reductase. The enzyme is very sensitive to oxygen. In Methanothermobacter marburgensis (strain ATCC BAA-927 / DSM 2133 / JCM 14651 / NBRC 100331 / OCM 82 / Marburg) (Methanobacterium thermoautotrophicum), this protein is Fumarate reductase (CoM/CoB) subunit A.